Consider the following 348-residue polypeptide: Chemokine C-C motif receptor-like 2 (348 aa).

Over 1-43 the chain is Extracellular; it reads MANYTPAPEDDYDVFIEDDLSDDEIEPCTPYDPKILSAQLVPY. Residues 44–64 form a helical membrane-spanning segment; sequence LYTTVFMVGLLDNILVVFILV. Over 65-76 the chain is Cytoplasmic; it reads KYKGLRQAENMS. The chain crosses the membrane as a helical span at residues 77 to 97; sequence FLNLALSNLGFLLTLPFWAYA. The Extracellular segment spans residues 98–110; sequence ASHGEGFDDPLCK. Cys109 and Cys187 are oxidised to a cystine. Residues 111–131 form a helical membrane-spanning segment; sequence ILLLLYSIGLYSEAFFNVLLT. The Cytoplasmic segment spans residues 132–150; sequence VQRYKEFFHVRRRFSACRT. Residues 151 to 171 form a helical membrane-spanning segment; it reads VAGSIFISVLVWVTATLVTLP. The Extracellular segment spans residues 172-204; it reads ELVSYKPQMQSQKYKCFFTGLHFLPADETFWKH. A helical transmembrane segment spans residues 205-225; that stretch reads FLTLKMNILGFLLPLFAFVYC. Residues 226 to 244 are Cytoplasmic-facing; the sequence is YVRMRKTLQFRERNYGLFK. Residues 245–265 traverse the membrane as a helical segment; sequence LVFTIMAVFLLMWGPYNIVLF. The Extracellular segment spans residues 266–292; the sequence is LSAFNEHFSLHGCGSSYNLNKSVQITR. Residue Asn285 is glycosylated (N-linked (GlcNAc...) asparagine). Residues 293–313 traverse the membrane as a helical segment; that stretch reads IIAATHCCVNPLLYVFLDKAF. At 314 to 348 the chain is on the cytoplasmic side; it reads RKHLCHLFYLCSDTAPQPTEEPAQGASGEEYHLSS.

Belongs to the G-protein coupled receptor 1 family.

It localises to the cell membrane. Its function is as follows. Receptor for CCL19 and chemerin/RARRES2. Does not appear to be a signaling receptor, but may have a role in modulating chemokine-triggered immune responses by capturing and internalizing CCL19 or by presenting RARRES2 ligand to CMKLR1, a functional signaling receptor. Plays a critical role for the development of Th2 responses. The sequence is that of Chemokine C-C motif receptor-like 2 (CCRL2) from Bos taurus (Bovine).